Consider the following 161-residue polypeptide: Nucleotide-binding protein Dtpsy_2240 (161 aa).

This sequence belongs to the YajQ family.

Its function is as follows. Nucleotide-binding protein. This is Nucleotide-binding protein Dtpsy_2240 from Acidovorax ebreus (strain TPSY) (Diaphorobacter sp. (strain TPSY)).